Reading from the N-terminus, the 301-residue chain is Homeobox protein knotted-1-like 1 (301 aa).

Residues 141 to 170 (CSGATSPPATTATHSDEMVGSSDEDQCSGE) form a disordered region. Positions 144–153 (ATSPPATTAT) are enriched in low complexity. The 21-residue stretch at 188–208 (ELKEMLLKKYSGCLSRLRSEF) folds into the ELK domain. Residues 209 to 272 (LKKRKKGKLP…NQRKRHWKPS (64 aa)) constitute a DNA-binding region (homeobox; TALE-type).

Belongs to the TALE/KNOX homeobox family.

It is found in the nucleus. Probable transcription factor that may be involved in shoot formation during early embryogenesis. This chain is Homeobox protein knotted-1-like 1 (OSH6), found in Oryza sativa subsp. japonica (Rice).